The sequence spans 264 residues: DNA-directed RNA polymerase subunit Rpo3 (264 aa).

Residues Cys203, Cys206, and Cys209 each contribute to the [3Fe-4S] cluster site.

The protein belongs to the archaeal Rpo3/eukaryotic RPB3 RNA polymerase subunit family. As to quaternary structure, part of the RNA polymerase complex. It depends on [3Fe-4S] cluster as a cofactor.

Its subcellular location is the cytoplasm. The catalysed reaction is RNA(n) + a ribonucleoside 5'-triphosphate = RNA(n+1) + diphosphate. DNA-dependent RNA polymerase (RNAP) catalyzes the transcription of DNA into RNA using the four ribonucleoside triphosphates as substrates. In Methanothermobacter thermautotrophicus (strain ATCC 29096 / DSM 1053 / JCM 10044 / NBRC 100330 / Delta H) (Methanobacterium thermoautotrophicum), this protein is DNA-directed RNA polymerase subunit Rpo3.